Here is a 329-residue protein sequence, read N- to C-terminus: DNA-directed RNA polymerase subunit alpha (329 aa).

Positions Met-1–Arg-235 are alpha N-terminal domain (alpha-NTD). An alpha C-terminal domain (alpha-CTD) region spans residues Phe-249–Glu-329.

It belongs to the RNA polymerase alpha chain family. Homodimer. The RNAP catalytic core consists of 2 alpha, 1 beta, 1 beta' and 1 omega subunit. When a sigma factor is associated with the core the holoenzyme is formed, which can initiate transcription.

It carries out the reaction RNA(n) + a ribonucleoside 5'-triphosphate = RNA(n+1) + diphosphate. DNA-dependent RNA polymerase catalyzes the transcription of DNA into RNA using the four ribonucleoside triphosphates as substrates. The polypeptide is DNA-directed RNA polymerase subunit alpha (Aeromonas hydrophila subsp. hydrophila (strain ATCC 7966 / DSM 30187 / BCRC 13018 / CCUG 14551 / JCM 1027 / KCTC 2358 / NCIMB 9240 / NCTC 8049)).